Here is a 739-residue protein sequence, read N- to C-terminus: Probable endo-1,3(4)-beta-glucanase An02g00850 (739 aa).

A signal peptide spans 1–24 (MPTSTLLWSVGSLALSSMVLPAAA). The GH16 domain maps to 31 to 283 (ETWKGEDFLT…WAGGVYSTSG (253 aa)). N-linked (GlcNAc...) asparagine glycosylation is found at Asn-59 and Asn-74. Glu-140 serves as the catalytic Nucleophile. The active-site Proton donor is Glu-145. Asn-396 is a glycosylation site (N-linked (GlcNAc...) asparagine). Low complexity-rich tracts occupy residues 431 to 442 (SEATEASNSEGS), 452 to 499 (TGAS…AGAT), and 507 to 522 (GASGEADSSEGASAAA). Positions 431–718 (SEATEASNSE…TPSTPVFTGG (288 aa)) are disordered. N-linked (GlcNAc...) asparagine glycans are attached at residues Asn-459 and Asn-482. Residues 523 to 532 (TPSNVSSTGA) show a composition bias toward polar residues. Asn-526 and Asn-537 each carry an N-linked (GlcNAc...) asparagine glycan. Polar residues predominate over residues 539 to 548 (SEDSSASSEA). Low complexity predominate over residues 561-587 (GASAEANGNDSASSNAATASNVSGASA). 4 N-linked (GlcNAc...) asparagine glycosylation sites follow: Asn-569, Asn-581, Asn-592, and Asn-620. A compositionally biased stretch (low complexity) spans 597 to 641 (ASAGANAGSSAAPSSVSGASAEANGSEGSSSHSSGSQAGAHSYGS). Residues 654–673 (PSSSSHAFATAPSSTGSSRV) show a composition bias toward polar residues. Over residues 674–713 (PTSAAAANNAAAATQGSSASGSNSGSSGHGSSSATTPSTP) the composition is skewed to low complexity. A lipid anchor (GPI-anchor amidated glycine) is attached at Gly-717. Positions 718–739 (GANKLTLGASSVLSVLAFALLA) are cleaved as a propeptide — removed in mature form.

The protein belongs to the glycosyl hydrolase 16 family.

It is found in the cell membrane. The enzyme catalyses Endohydrolysis of (1-&gt;3)- or (1-&gt;4)-linkages in beta-D-glucans when the glucose residue whose reducing group is involved in the linkage to be hydrolyzed is itself substituted at C-3.. In terms of biological role, mixed-linked glucanase involved in the degradation of complex natural cellulosic substrates. This is Probable endo-1,3(4)-beta-glucanase An02g00850 from Aspergillus niger (strain ATCC MYA-4892 / CBS 513.88 / FGSC A1513).